Reading from the N-terminus, the 374-residue chain is MILTELHLHHFRNYQDLTVHFNPGVNVLIGHNAQGKTNMLEAIYVLSLTKSHRTSNDHELINWQEKSALISGTVEKSIGKIPLELQFSSKGKKAKVNHLEQARLSQYVGQLNAILFAPEDLSLVKGSPALRRHFMDREFSQMSSKYLYNAGQYRTLLRQKNKYLKQLKYRQQTDRVLLGVLSDQLAAFGAEVIIARQHFLKHLEGWAADLHQEISLNKESLRLEYVNQLKVSDDTTVEEAYQALFKLYQDNEQREIEQGTTIYGPHRDDIRFLVNDKNVQAFGSQGQQRTTALSVKLAEIDLMKEQTGEYPLLLLDDVLSELDTIRQTHLLTAIQNKVQTFLTTTSLSDVARQLINEPTIFEIEHGTLNKEEVK.

30–37 (GHNAQGKT) serves as a coordination point for ATP.

Belongs to the RecF family.

The protein localises to the cytoplasm. Its function is as follows. The RecF protein is involved in DNA metabolism; it is required for DNA replication and normal SOS inducibility. RecF binds preferentially to single-stranded, linear DNA. It also seems to bind ATP. This Limosilactobacillus reuteri (strain DSM 20016) (Lactobacillus reuteri) protein is DNA replication and repair protein RecF.